Here is a 351-residue protein sequence, read N- to C-terminus: 3-dehydroquinate synthase (351 aa).

NAD(+) contacts are provided by residues 60–65 (DGEEYK), 94–98 (GVISD), 118–119 (TT), lysine 131, lysine 140, and 158–161 (FLKT). Zn(2+) is bound by residues glutamate 173, histidine 239, and histidine 256.

The protein belongs to the sugar phosphate cyclases superfamily. Dehydroquinate synthase family. The cofactor is NAD(+). Requires Co(2+) as cofactor. Zn(2+) is required as a cofactor.

It is found in the cytoplasm. The catalysed reaction is 7-phospho-2-dehydro-3-deoxy-D-arabino-heptonate = 3-dehydroquinate + phosphate. Its pathway is metabolic intermediate biosynthesis; chorismate biosynthesis; chorismate from D-erythrose 4-phosphate and phosphoenolpyruvate: step 2/7. Its function is as follows. Catalyzes the conversion of 3-deoxy-D-arabino-heptulosonate 7-phosphate (DAHP) to dehydroquinate (DHQ). The chain is 3-dehydroquinate synthase from Campylobacter jejuni subsp. jejuni serotype O:2 (strain ATCC 700819 / NCTC 11168).